Here is a 465-residue protein sequence, read N- to C-terminus: Gamma-aminobutyric acid receptor subunit rho-2 (465 aa).

Positions Met-1–Ser-20 are cleaved as a signal peptide. Residues Arg-21–His-260 are Extracellular-facing. Arg-105 provides a ligand contact to 4-aminobutanoate. Asn-120 carries N-linked (GlcNAc...) asparagine glycosylation. Residue Ser-169 coordinates 4-aminobutanoate. A disulfide bridge connects residues Cys-178 and Cys-192. Residue Glu-197 coordinates 4-aminobutanoate. Asn-254 is a glycosylation site (N-linked (GlcNAc...) asparagine). A helical transmembrane segment spans residues Ile-261 to Val-281. Residues Ser-282–Arg-293 are Cytoplasmic-facing. A helical transmembrane segment spans residues Val-294 to Ser-314. Residues Met-315–Asp-325 lie on the Extracellular side of the membrane. A helical transmembrane segment spans residues Ile-326–Asn-346. The Cytoplasmic segment spans residues Tyr-347 to Lys-443. The helical transmembrane segment at Tyr-444–Phe-464 threads the bilayer. Position 465 (Ser-465) is a topological domain, extracellular.

Belongs to the ligand-gated ion channel (TC 1.A.9) family. Gamma-aminobutyric acid receptor (TC 1.A.9.5) subfamily. GABRR2 sub-subfamily. As to quaternary structure, three rho subunits (rho-1/GBRR1, rho-2/GBRR2 and rho-3/GBRR3) coassemble either to form functional homopentamers or heteropentamers. Rho-2 is unable to form a functional homopentamer. Interacts with SQSTM1. As to expression, expressed in spinal cord and in cerebellum. Expressed in retina.

The protein localises to the postsynaptic cell membrane. The protein resides in the cell membrane. It carries out the reaction chloride(in) = chloride(out). In contrast with rho-1 and rho-3 homopentamers, rho-2 GABAARs are not inhibited by picrotoxin. Rho subunit of the pentameric ligand-gated chloride channels responsible for mediating the effects of gamma-aminobutyric acid (GABA), the major inhibitory neurotransmitter in the brain. Rho-containing GABA-gated chloride channels are a subclass of GABA(A) receptors (GABAARs) entirely composed of rho subunits, where GABA molecules bind at the rho intersubunit interfaces. When activated by GABA, rho-GABAARs selectively allow the flow of chloride anions across the cell membrane down their electrochemical gradient. Rho-2 GABAARs may contribute to the regulation of glial development in the cerebellum by controlling extrasynaptic transmission. Rho-2 GABAARs are also involved in neuronal tonic (extrasynaptic) and phasic (synaptic) transmission in the Purkinje neurons of the cerebellum. Rho-2 GABAARs expressed in retina may play a role in retinal neurotransmission. The sequence is that of Gamma-aminobutyric acid receptor subunit rho-2 from Rattus norvegicus (Rat).